A 1002-amino-acid chain; its full sequence is UPF0182 protein alr1037 (1002 aa).

9 consecutive transmembrane segments (helical) span residues 7 to 29, 49 to 71, 123 to 145, 178 to 200, 202 to 224, 258 to 280, 300 to 319, 339 to 361, and 382 to 404; these read FRLSIVFVGLWLLLDLSSRLGAE, RGVLWVVAAGVTAVYLWGNLALA, LRWLLPLAFVFSLLAGLILVHYG, QVFSQVLYLGLIVGIAIAILIYS, FFLRAIAVVLSVVFGTILFYNWA, LLELWLMGMFLYGFIAVTLTYLL, HLYGMGGLLMLMVAFSYWLS, VVVQLPIYNILCVLGLAIAFYLL, and GAYLFVVVAAGSVLPTIVQYLIV.

The protein belongs to the UPF0182 family.

Its subcellular location is the cell membrane. This chain is UPF0182 protein alr1037, found in Nostoc sp. (strain PCC 7120 / SAG 25.82 / UTEX 2576).